The following is an 867-amino-acid chain: Nuclear cap-binding protein subunit 1 (867 aa).

The MIF4G domain maps to Leu-9–Ser-228. The segment at Ser-752 to Asn-797 is disordered. Polar residues predominate over residues Asp-788–Asn-797.

This sequence belongs to the NCBP1 family. In terms of assembly, component of the nuclear cap-binding complex (CBC), a heterodimer composed of ABH1/CBP80 and CBP20 that interacts with m7GpppG-capped RNA.

The protein resides in the nucleus. The protein localises to the cytoplasm. Its function is as follows. Component of the cap-binding complex (CBC), which binds cotranscriptionally to the 5'-cap of pre-mRNAs and is involved in various processes such as pre-mRNA splicing and RNA-mediated gene silencing (RNAi) by microRNAs (miRNAs). The CBC complex is involved in miRNA-mediated RNA interference and is required for primary miRNA processing. In the CBC complex, ABH1/CBP80 does not bind directly capped RNAs (m7GpppG-capped RNA) but is required to stabilize the movement of the N-terminal loop of CBP20 and lock the CBC into a high affinity cap-binding state with the cap structure. This is Nuclear cap-binding protein subunit 1 (ABH1) from Oryza sativa subsp. japonica (Rice).